The primary structure comprises 426 residues: Pistil-specific extensin-like protein (426 aa).

The signal sequence occupies residues 1-23; it reads MAVIISSKVLLIQLFVLVLGSFS. Disordered stretches follow at residues 56–109 and 121–254; these read GPTF…GSKL and NLPD…AAEP. 4 stretches are compositionally biased toward pro residues: residues 60-94, 123-161, 168-224, and 231-254; these read VLPPPSPLPSPPPPSPSPPPPSPSPPPPSTIPLIP, PDVPPIGGGPPVNQPKPSSPSPLVKPPPPPPSPCKPSPP, PPQP…PPPP, and LLPPPPPVAYPPVMTPSPSPAAEP. 3 consecutive repeat copies span residues 69 to 73, 76 to 80, and 83 to 87. The segment at 69–182 is 4 X 5 AA repeats of S-P(4); that stretch reads SPPPPSPSPP…PAKQPSPPPP (114 aa). The stretch at 178 to 182 is repeat 4; it reads SPPPP. Asn310 carries N-linked (GlcNAc...) asparagine glycosylation.

In terms of tissue distribution, pistil (stigma and style tissue).

The polypeptide is Pistil-specific extensin-like protein (Nicotiana tabacum (Common tobacco)).